The chain runs to 552 residues: Serine/threonine-protein kinase RIO2 (552 aa).

One can recognise a Protein kinase domain in the interval 97–272 (VGNQMGVGKE…DRDVKCIKDF (176 aa)). Residue Lys123 coordinates ATP. Catalysis depends on Asp228, which acts as the Proton acceptor. 9 positions are modified to phosphoserine: Ser332, Ser335, Ser337, Ser350, Ser362, Ser380, Ser382, Ser385, and Ser390. A Nuclear export signal motif is present at residues 399-408 (ALEEIKGQVV). Phosphoserine occurs at positions 412, 417, and 442. A Phosphotyrosine modification is found at Tyr445. Ser548 carries the phosphoserine modification.

The protein belongs to the protein kinase superfamily. RIO-type Ser/Thr kinase family. In terms of assembly, associated with late 40S pre-ribosomal particles. Interacts with PLK1 (via its N-terminus). The cofactor is Mg(2+). In terms of processing, autophosphorylated (in vitro). Phosphorylation at Ser-335, Ser-380, Ser-548 by PLK1 affects the timing of the metaphase-anaphase transition.

Its subcellular location is the cytoplasm. The catalysed reaction is L-seryl-[protein] + ATP = O-phospho-L-seryl-[protein] + ADP + H(+). The enzyme catalyses L-threonyl-[protein] + ATP = O-phospho-L-threonyl-[protein] + ADP + H(+). Functionally, serine/threonine-protein kinase involved in the final steps of cytoplasmic maturation of the 40S ribosomal subunit. Involved in export of the 40S pre-ribosome particles (pre-40S) from the nucleus to the cytoplasm. Its kinase activity is required for the release of NOB1, PNO1 and LTV1 from the late pre-40S and the processing of 18S-E pre-rRNA to the mature 18S rRNA. Regulates the timing of the metaphase-anaphase transition during mitotic progression, and its phosphorylation, most likely by PLK1, regulates this function. This chain is Serine/threonine-protein kinase RIO2, found in Homo sapiens (Human).